Here is a 522-residue protein sequence, read N- to C-terminus: Glycoprotein (522 aa).

Residues 1–25 form the signal peptide; sequence MSQLNLIPFFCVIIVLSVEDFPLYT. Over 26-455 the chain is Virion surface; sequence IPEKIGPWTP…VSDVDLGLPD (430 aa). Residues 456 to 476 form a helical membrane-spanning segment; sequence WSLYALIGATIIAFFILICLI. Over 477-522 the chain is Intravirion; the sequence is RICCKKGGRRNSPTNRPDLPIGLSTTPQPKSKVISSWESYKGTSNV. Cys-480 carries the S-palmitoyl cysteine; by host lipid modification.

Belongs to the lyssavirus glycoprotein family. In terms of assembly, homotrimer. Interacts with matrix protein. Glycosylated and palmitoylated by host. Glycosylation is crucial for glycoprotein export at the cell surface.

Its subcellular location is the virion membrane. In terms of biological role, attaches the virus to host cellular receptor, inducing endocytosis of the virion. In the endosome, the acidic pH induces conformational changes in the glycoprotein trimer, which trigger fusion between virus and cell membrane. The polypeptide is Glycoprotein (G) (Homo sapiens (Human)).